The primary structure comprises 143 residues: uncharacterized protein (143 aa).

2 helical membrane passes run 20-39 (FKYC…WITV) and 113-135 (YFSL…ITGL).

The protein resides in the membrane. This is an uncharacterized protein from Saccharomyces cerevisiae (strain ATCC 204508 / S288c) (Baker's yeast).